The following is a 301-amino-acid chain: UstYa family oxidase phomYd (301 aa).

Residues 1-26 (MEKFFSPSRHNYADLSPTDVPASEES) are disordered. A helical transmembrane segment spans residues 47–69 (VLVNRLLAASTVALVMVSLWLGW). 2 short sequence motifs (HXXHC) span residues 189-194 (THSVHC) and 218-222 (HTDHC). N-linked (GlcNAc...) asparagine glycosylation is present at asparagine 275.

The protein belongs to the ustYa family.

Its subcellular location is the membrane. It functions in the pathway mycotoxin biosynthesis. Its function is as follows. UstYa family oxidase; part of the gene cluster that mediates the biosynthesis of the phomopsins, a group of hexapeptide mycotoxins which infects lupins and causes lupinosis disease in livestock. Within the pathway, phomYd catalyzes the desaturation of the Asp moiety into 2,3-dehydroaspartic acid (dAsp). The pathway starts with the processing of the precursor phomA by several endopeptidases including kexin proteases as well as the cluster-specific S41 family peptidase phomP1 and the oligopeptidase phomG to produce 10 identical copies of the hexapeptide Tyr-Val-Ile-Pro-Ile-Asp. After being excised from the precursor peptide, the core peptides are cyclized and modified post-translationally by enzymes encoded within the gene cluster. The timing and order of proteolysis of the phomA precursor and PTMs are still unknown. Two tyrosinase-like enzymes, phomQ1 and phomQ2, catalyze the chlorination and hydroxylation of Tyr, respectively. PhomYb, is proposed to be involved in the construction of the macrocyclic structure. The other 4 ustYa family proteins may be involved in PTMs that generate the unique structure of phomopsin A. PhomYa is required for the hydroxylation of C-beta of Tyr. PhomYc, phomYd, and phomYe are responsible for the biosynthesis of 2,3-dehydroisoleucine (dIle), 2,3-dehydroaspartic acid (dAsp), and 3,4-dehydroproline (dPro), respectively. While dIle formation by phomYc is indispensable for the installation of dAsp by phomYd, the order of the other PTMs have not been elucidated yet. Most of the biosynthetic enzymes likely have broad substrate specificity, and thus, there might be a metabolic grid from a precursor to phomopsin A. The enzyme(s) responsible for the biosynthesis of 3,4-dehydrovaline (dVal) have also not been identified yet. Finally, phomM acts as an S-adenosylmethionine-dependent alpha-N-methyltransferase that catalyzes two successive N-methylation reactions, converting N-desmethyl-phomopsin A to phomopsin A and phomopsin A further to an N,N-dimethylated congener called phomopsin E. This Diaporthe leptostromiformis (Lupinosis disease fungus) protein is UstYa family oxidase phomYd.